The chain runs to 668 residues: DNA ligase (668 aa).

NAD(+) contacts are provided by residues 34–38, 83–84, and E113; these read DAEYD and SL. K115 functions as the N6-AMP-lysine intermediate in the catalytic mechanism. NAD(+)-binding residues include R136, E170, K286, and K310. Zn(2+) contacts are provided by C404, C407, C422, and C427. The region spanning 590-668 is the BRCT domain; it reads DSDSYFAGKT…EEQLMGELKK (79 aa).

This sequence belongs to the NAD-dependent DNA ligase family. LigA subfamily. Mg(2+) serves as cofactor. Requires Mn(2+) as cofactor.

The catalysed reaction is NAD(+) + (deoxyribonucleotide)n-3'-hydroxyl + 5'-phospho-(deoxyribonucleotide)m = (deoxyribonucleotide)n+m + AMP + beta-nicotinamide D-nucleotide.. Functionally, DNA ligase that catalyzes the formation of phosphodiester linkages between 5'-phosphoryl and 3'-hydroxyl groups in double-stranded DNA using NAD as a coenzyme and as the energy source for the reaction. It is essential for DNA replication and repair of damaged DNA. This is DNA ligase from Bacillus subtilis (strain 168).